Reading from the N-terminus, the 575-residue chain is Cyclic nucleotide-gated channel alpha-4 (575 aa).

Over 1–38 the chain is Cytoplasmic; sequence MSQDGKVKTTESTPPAPTKARKWLPVLDPSGDYYYWWL. The helical transmembrane segment at 39 to 60 threads the bilayer; sequence NTMVFPIMYNLIIVVCRACFPD. At 61–70 the chain is on the extracellular side; that stretch reads LQHSYLVAWF. A helical transmembrane segment spans residues 71 to 91; it reads VLDYTSDLLYLLDIGVRFHTG. The Cytoplasmic segment spans residues 92–116; it reads FLEQGILVVDKGMIASRYVRTWSFL. The helical transmembrane segment at 117–135 threads the bilayer; sequence LDLASLVPTDAAYVQLGPH. Residues 136–140 lie on the Extracellular side of the membrane; sequence IPTLR. Residues 141–159 traverse the membrane as a helical segment; it reads LNRFLRVPRLFEAFDRTET. At 160–166 the chain is on the cytoplasmic side; the sequence is RTAYPNA. The interval 164–272 is ion conduction pathway; that stretch reads PNAFRIAKLM…GSMSSVIYNM (109 aa). The chain crosses the membrane as a helical span at residues 167 to 190; sequence FRIAKLMLYIFVVIHWNSCLYFAL. The Extracellular portion of the chain corresponds to 191 to 213; the sequence is SRYLGFGRDAWVYPDPAQPGFER. A run of 2 helical transmembrane segments spans residues 214–248 and 249–273; these read LRRQ…LFMV and GDFL…YNMN. A selectivity filter region spans residues 231–234; the sequence is TVGD. The C-linker stretch occupies residues 274-350; the sequence is TADAAFYPDH…STLSRVQIFQ (77 aa). The Cytoplasmic segment spans residues 274–575; that stretch reads TADAAFYPDH…AGQAGPSGIE (302 aa). The IQ-type signature appears at 292 to 302; sequence LQHVNKRLERR. Residue 348 to 471 participates in a nucleoside 3',5'-cyclic phosphate binding; the sequence is IFQNCEASLL…AVMEEKGREI (124 aa). The interval 354 to 474 is cyclic nucleotide-binding domain; it reads ASLLEELVLK…EEKGREILLK (121 aa). 3',5'-cyclic GMP-binding residues include Gly-414, Ser-417, Arg-430, and Thr-431. Arg-430 and Thr-431 together coordinate 3',5'-cyclic AMP. Residues 493-547 are a coiled coil; the sequence is TESRLKGLDQQLDDLQTKFARLLAELESSALKIAYRIERLEWQTREWPMPEDMGE. Residues 537–575 form a disordered region; that stretch reads REWPMPEDMGEADDEAEPGEGTSKDGEGKAGQAGPSGIE. Residues 544-554 show a composition bias toward acidic residues; that stretch reads DMGEADDEAEP.

The protein belongs to the cyclic nucleotide-gated cation channel (TC 1.A.1.5) family. CNGA4 subfamily. The olfactory cyclic nucleotide-gated channel is an heterotetramer composed of CNGA2, CNGA4 and CNGB1b subunits with 2:1:1 stoichiometry. May form homomeric channels gated by nitric oxide. Post-translationally, N-glycosylated. In terms of tissue distribution, olfactory neurons. Expressed in olfactory sensory cilia (at protein level).

Its subcellular location is the cell projection. It is found in the cilium membrane. The catalysed reaction is Ca(2+)(in) = Ca(2+)(out). The enzyme catalyses Na(+)(in) = Na(+)(out). It catalyses the reaction K(+)(in) = K(+)(out). It carries out the reaction NH4(+)(in) = NH4(+)(out). The catalysed reaction is Rb(+)(in) = Rb(+)(out). The enzyme catalyses Li(+)(in) = Li(+)(out). It catalyses the reaction Cs(+)(in) = Cs(+)(out). With respect to regulation, ca(2+)-calmodulin exerts its inhibitory effect in cAMP sensitivity by binding to IQ-like motif of CNGA4 and preferably binds to the channel in the closed state. Inhibition by PIP3 of the CNG channel probably occurs via CGNA2 binding. Ca(2+) currents are inhibited by pimozide, an L-type Ca(2+) channel blocker. Its function is as follows. Pore-forming subunit of the olfactory cyclic nucleotide-gated channel. Operates in the cilia of olfactory sensory neurons where chemical stimulation of the odorant is converted to an electrical signal. Mediates odorant-induced cAMP-dependent Ca(2+) influx triggering neuron depolarization. The rise of intracellular Ca(2+) levels potentiates the olfactory response by activating Ca(2+)-dependent Cl(-) channels, but it also serves as a negative feedback signal to desensitize the channel for rapid adaptation to odorants. Conducts cAMP- and cGMP-gated ion currents, with permeability for monovalent and divalent cations. May conduct nitric oxide-gated Ca(2+) currents relevant to neurons of vomeronasal organ, a system involved in the perception of pheromones. The chain is Cyclic nucleotide-gated channel alpha-4 from Rattus norvegicus (Rat).